The following is a 461-amino-acid chain: GTPase Der (461 aa).

EngA-type G domains lie at 2-164 (QKII…EDDV) and 197-368 (IRVG…KNFT). Residues 8-15 (GKPNVGKS), 55-59 (DSGGL), 116-119 (NKID), 203-210 (GRVNVGKS), 250-254 (DTAGI), and 314-317 (NKWD) each bind GTP. Residues 369-453 (QKIQTSKLNE…PIVLAPKKRG (85 aa)) form the KH-like domain.

The protein belongs to the TRAFAC class TrmE-Era-EngA-EngB-Septin-like GTPase superfamily. EngA (Der) GTPase family. Associates with the 50S ribosomal subunit.

Functionally, GTPase that plays an essential role in the late steps of ribosome biogenesis. This Campylobacter curvus (strain 525.92) protein is GTPase Der.